Consider the following 690-residue polypeptide: Quinohemoprotein alcohol dehydrogenase ADH IIB (690 aa).

A signal peptide spans M1–A22. E81 is a pyrroloquinoline quinone binding site. The cysteines at positions 127 and 128 are disulfide-linked. Pyrroloquinoline quinone-binding positions include R133, T177, and G193 to A194. Ca(2+) is bound at residue E195. T252 is a binding site for pyrroloquinoline quinone. 2 residues coordinate Ca(2+): N272 and D317. The active-site Proton acceptor is D317. Residues K344, N404–W405, and V547 contribute to the pyrroloquinoline quinone site. A Cytochrome c domain is found at E600 to E678. Heme c is bound by residues C613, C616, H617, and M655.

It belongs to the bacterial PQQ dehydrogenase family. In terms of assembly, monomer. Pyrroloquinoline quinone serves as cofactor. Requires Ca(2+) as cofactor. Heme c is required as a cofactor.

Its subcellular location is the periplasm. It carries out the reaction 2 oxidized [azurin] + a primary alcohol = 2 reduced [azurin] + an aldehyde + 2 H(+). Inhibited by 10 mM 1-butanol. Catalyzes the dye-linked oxidation of primary alcohols to the corresponding aldehydes and the (subsequent) oxidation of the aldehydes to carboxylic acids. Exhibits activity with longer mono-alcohols (C-4 to C-7) but not with methanol or glycerol. Reacts with 1,2-propanediol and 1,3-propanediol but not with sugar alcohols such as D-sorbitol. In Pseudomonas putida (Arthrobacter siderocapsulatus), this protein is Quinohemoprotein alcohol dehydrogenase ADH IIB.